Here is a 238-residue protein sequence, read N- to C-terminus: MAGGLPHPVLLVDEAAKSVGLYKLNDVFHAQVIDSNVIYAWFAMVLLIILGTLATRKLAMVPSGLQNFFEVVVGGLESFVVENIGEKGRKVYPFLCALFLFIITGNLIGLVPGLDSPTNNVNTNAAMALTVFAYYNFWGIRMWGAGYIKHFMGPFWWLVPLMLPIEIISHLARPLSLTLRLFGNIRGEEIVLVLLFALAPVVGTFPMYFLFSLADCIQAFVFFMLAMIYLKGSLDHAH.

The next 7 membrane-spanning stretches (helical) occupy residues 35 to 55 (SNVI…TLAT), 61 to 81 (VPSG…SFVV), 94 to 114 (FLCA…VPGL), 128 to 148 (ALTV…AGYI), 151 to 171 (FMGP…ISHL), 190 to 210 (IVLV…MYFL), and 211 to 231 (FSLA…IYLK).

Belongs to the ATPase A chain family. F-type ATPases have 2 components, CF(1) - the catalytic core - and CF(0) - the membrane proton channel. CF(1) has five subunits: alpha(3), beta(3), gamma(1), delta(1), epsilon(1). CF(0) has three main subunits: a(1), b(2) and c(9-12). The alpha and beta chains form an alternating ring which encloses part of the gamma chain. CF(1) is attached to CF(0) by a central stalk formed by the gamma and epsilon chains, while a peripheral stalk is formed by the delta and b chains.

It is found in the cell inner membrane. In terms of biological role, key component of the proton channel; it plays a direct role in the translocation of protons across the membrane. This chain is ATP synthase subunit a, found in Solidesulfovibrio magneticus (strain ATCC 700980 / DSM 13731 / RS-1) (Desulfovibrio magneticus).